The chain runs to 260 residues: Small ribosomal subunit protein eS1 (260 aa).

A compositionally biased stretch (basic residues) spans 1–18 (MAVGKNKRMSKGKKGGKK). Residues 1-20 (MAVGKNKRMSKGKKGGKKKA) are disordered.

It belongs to the eukaryotic ribosomal protein eS1 family. As to quaternary structure, component of the small ribosomal subunit. Mature ribosomes consist of a small (40S) and a large (60S) subunit. The 40S subunit contains about 33 different proteins and 1 molecule of RNA (18S). The 60S subunit contains about 49 different proteins and 3 molecules of RNA (25S, 5.8S and 5S).

It localises to the cytoplasm. This is Small ribosomal subunit protein eS1 from Ostreococcus lucimarinus (strain CCE9901).